The chain runs to 245 residues: Actin-like protein 10 (245 aa).

Belongs to the actin family.

The protein is Actin-like protein 10 (ACTL10) of Homo sapiens (Human).